The sequence spans 118 residues: Co-chaperonin GroES (118 aa).

The protein belongs to the GroES chaperonin family. Heptamer of 7 subunits arranged in a ring. Interacts with the chaperonin GroEL.

The protein localises to the cytoplasm. Functionally, together with the chaperonin GroEL, plays an essential role in assisting protein folding. The GroEL-GroES system forms a nano-cage that allows encapsulation of the non-native substrate proteins and provides a physical environment optimized to promote and accelerate protein folding. GroES binds to the apical surface of the GroEL ring, thereby capping the opening of the GroEL channel. This is Co-chaperonin GroES from Helicobacter pylori (strain Shi470).